Reading from the N-terminus, the 337-residue chain is Holliday junction branch migration complex subunit RuvB (337 aa).

Residues 1-20 (MQTRFVSPVNHDEEQDEPSV) form a disordered region. Residues 1-181 (MQTRFVSPVN…FGIILRLDLY (181 aa)) form a large ATPase domain (RuvB-L) region. Residues Arg-21, Gly-62, Lys-65, Thr-66, Thr-67, 128 to 130 (EDY), Arg-171, Tyr-181, and Arg-218 each bind ATP. Thr-66 serves as a coordination point for Mg(2+). The segment at 182–252 (DPSELTVIVT…IANTALFALG (71 aa)) is small ATPAse domain (RuvB-S). Positions 255 to 337 (QKGLDILDRR…SHTRDLTSFL (83 aa)) are head domain (RuvB-H). Arg-310 and Arg-315 together coordinate DNA.

The protein belongs to the RuvB family. As to quaternary structure, homohexamer. Forms an RuvA(8)-RuvB(12)-Holliday junction (HJ) complex. HJ DNA is sandwiched between 2 RuvA tetramers; dsDNA enters through RuvA and exits via RuvB. An RuvB hexamer assembles on each DNA strand where it exits the tetramer. Each RuvB hexamer is contacted by two RuvA subunits (via domain III) on 2 adjacent RuvB subunits; this complex drives branch migration. In the full resolvosome a probable DNA-RuvA(4)-RuvB(12)-RuvC(2) complex forms which resolves the HJ.

The protein resides in the cytoplasm. The enzyme catalyses ATP + H2O = ADP + phosphate + H(+). Functionally, the RuvA-RuvB-RuvC complex processes Holliday junction (HJ) DNA during genetic recombination and DNA repair, while the RuvA-RuvB complex plays an important role in the rescue of blocked DNA replication forks via replication fork reversal (RFR). RuvA specifically binds to HJ cruciform DNA, conferring on it an open structure. The RuvB hexamer acts as an ATP-dependent pump, pulling dsDNA into and through the RuvAB complex. RuvB forms 2 homohexamers on either side of HJ DNA bound by 1 or 2 RuvA tetramers; 4 subunits per hexamer contact DNA at a time. Coordinated motions by a converter formed by DNA-disengaged RuvB subunits stimulates ATP hydrolysis and nucleotide exchange. Immobilization of the converter enables RuvB to convert the ATP-contained energy into a lever motion, pulling 2 nucleotides of DNA out of the RuvA tetramer per ATP hydrolyzed, thus driving DNA branch migration. The RuvB motors rotate together with the DNA substrate, which together with the progressing nucleotide cycle form the mechanistic basis for DNA recombination by continuous HJ branch migration. Branch migration allows RuvC to scan DNA until it finds its consensus sequence, where it cleaves and resolves cruciform DNA. The sequence is that of Holliday junction branch migration complex subunit RuvB from Methanospirillum hungatei JF-1 (strain ATCC 27890 / DSM 864 / NBRC 100397 / JF-1).